Consider the following 114-residue polypeptide: Cytochrome b-c1 complex subunit 1, mitochondrial (114 aa).

Position 31 is an N6-acetyllysine (Lys-31).

The protein belongs to the peptidase M16 family. UQCRC1/QCR1 subfamily. In terms of assembly, component of the ubiquinol-cytochrome c oxidoreductase (cytochrome b-c1 complex, complex III, CIII), a multisubunit enzyme composed of 11 subunits. The complex is composed of 3 respiratory subunits cytochrome b, cytochrome c1 and Rieske protein UQCRFS1, 2 core protein subunits UQCRC1/QCR1 and UQCRC2/QCR2, and 6 low-molecular weight protein subunits UQCRH/QCR6, UQCRB/QCR7, UQCRQ/QCR8, UQCR10/QCR9, UQCR11/QCR10 and subunit 9, the cleavage product of Rieske protein UQCRFS1. The complex exists as an obligatory dimer and forms supercomplexes (SCs) in the inner mitochondrial membrane with NADH-ubiquinone oxidoreductase (complex I, CI) and cytochrome c oxidase (complex IV, CIV), resulting in different assemblies (supercomplex SCI(1)III(2)IV(1) and megacomplex MCI(2)III(2)IV(2)). Interacts with UQCC6. Interacts with STMP1.

It is found in the mitochondrion inner membrane. In terms of biological role, component of the ubiquinol-cytochrome c oxidoreductase, a multisubunit transmembrane complex that is part of the mitochondrial electron transport chain which drives oxidative phosphorylation. The respiratory chain contains 3 multisubunit complexes succinate dehydrogenase (complex II, CII), ubiquinol-cytochrome c oxidoreductase (cytochrome b-c1 complex, complex III, CIII) and cytochrome c oxidase (complex IV, CIV), that cooperate to transfer electrons derived from NADH and succinate to molecular oxygen, creating an electrochemical gradient over the inner membrane that drives transmembrane transport and the ATP synthase. The cytochrome b-c1 complex catalyzes electron transfer from ubiquinol to cytochrome c, linking this redox reaction to translocation of protons across the mitochondrial inner membrane, with protons being carried across the membrane as hydrogens on the quinol. In the process called Q cycle, 2 protons are consumed from the matrix, 4 protons are released into the intermembrane space and 2 electrons are passed to cytochrome c. The 2 core subunits UQCRC1/QCR1 and UQCRC2/QCR2 are homologous to the 2 mitochondrial-processing peptidase (MPP) subunits beta-MPP and alpha-MPP respectively, and they seem to have preserved their MPP processing properties. May be involved in the in situ processing of UQCRFS1 into the mature Rieske protein and its mitochondrial targeting sequence (MTS)/subunit 9 when incorporated into complex III. Seems to play an important role in the maintenance of proper mitochondrial function in nigral dopaminergic neurons. This is Cytochrome b-c1 complex subunit 1, mitochondrial from Mesocricetus auratus (Golden hamster).